Reading from the N-terminus, the 418-residue chain is Replication factor C large subunit (418 aa).

An ATP-binding site is contributed by 47–54 (GSQGTGKT).

The protein belongs to the activator 1 small subunits family. RfcL subfamily. In terms of assembly, heteromultimer composed of small subunits (RfcS) and large subunits (RfcL).

Part of the RFC clamp loader complex which loads the PCNA sliding clamp onto DNA. The chain is Replication factor C large subunit from Thermoplasma acidophilum (strain ATCC 25905 / DSM 1728 / JCM 9062 / NBRC 15155 / AMRC-C165).